Reading from the N-terminus, the 605-residue chain is Exonuclease V, mitochondrial (605 aa).

Residues methionine 1–phenylalanine 17 constitute a mitochondrion transit peptide. 4 residues coordinate [4Fe-4S] cluster: cysteine 140, cysteine 563, cysteine 566, and cysteine 572.

It belongs to the EXO5 family. As to quaternary structure, monomer. Mg(2+) serves as cofactor. It depends on [4Fe-4S] cluster as a cofactor.

The protein localises to the mitochondrion. Its function is as follows. Single strand DNA specific 5' exonuclease involved in mitochondrial DNA replication and recombination. Releases dinucleotides as main products of catalysis. Has the capacity to slide across 5'double-stranded DNA or 5'RNA sequences and resumes cutting two nucleotides downstream of the double-stranded-to-single-stranded junction or RNA-to-DNA junction, respectively. The chain is Exonuclease V, mitochondrial (EXO5) from Candida tropicalis (strain ATCC MYA-3404 / T1) (Yeast).